The primary structure comprises 536 residues: Octopamine receptor beta-2R (536 aa).

Residues 1 to 26 (MLLCDGLGPEPPRQRHRNRTSAARIR) form a disordered region. Residues 1 to 157 (MLLCDGLGPE…LDNIVWVFKA (157 aa)) are Extracellular-facing. Positions 14-26 (QRHRNRTSAARIR) are enriched in basic residues. Residues Asn-18, Asn-92, Asn-113, and Asn-126 are each glycosylated (N-linked (GlcNAc...) asparagine). The helical transmembrane segment at 158–178 (FVMLLIIIAAICGNLLVIISV) threads the bilayer. Topologically, residues 179 to 190 (MRVRKLRVITNY) are cytoplasmic. A helical transmembrane segment spans residues 191–211 (FVVSLAMADIMVAIMAMTFNF). Over 212–233 (SVQVTGRWNFSPFLCDLWNSLD) the chain is Extracellular. A helical transmembrane segment spans residues 234–256 (VYFSTASILHLCCISVDRYYAIV). The Cytoplasmic portion of the chain corresponds to 257 to 270 (KPLKYPISMTKRVV). Residues 271–291 (GIMLLNTWISPALLSFLPIFI) traverse the membrane as a helical segment. At 292 to 320 (GWYTTPQHQQFVIQNPTQCSFVVNKYYAV) the chain is on the extracellular side. Residues 321–341 (ISSSISFWIPCTIMIFTYLAI) form a helical membrane-spanning segment. The Cytoplasmic segment spans residues 342–412 (FREANRQEKQ…MKREHKAART (71 aa)). The chain crosses the membrane as a helical span at residues 413 to 433 (LGIIMGTFILCWLPFFLWYTL). The Extracellular segment spans residues 434–444 (SMTCEECQVPD). A helical transmembrane segment spans residues 445 to 465 (IVVSILFWIGYFNSTLNPLIY). Residues 466–536 (AYFNRDFREA…RRQSQMVDNL (71 aa)) lie on the Cytoplasmic side of the membrane.

It belongs to the G-protein coupled receptor 1 family. In the adult, expressed in the superior protocerebrum and the optic lobe medulla of the central nervous system, nurse cells of egg chambers in the ovary at oogenic stages 1-10, and spermatogonia and spermatocytes in the testis. Expressed in the oviduct epithelium. Also expressed in the spermatheca. Expressed in embryonic and larval ventral nerve cord and brain lobe, embryonic and larval salivary glands and larval imaginal disk and midgut. Also expressed in larval synaptic boutons.

It localises to the cell membrane. Functionally, autoreceptor for octopamine (OA), which is a neurotransmitter, neurohormone, and neuromodulator in invertebrates. Essential for ovulation and fertilization. During ovulation it mediates the OA-induced relaxation of the oviduct visceral muscles, by increasing cAMP levels and activating effectors such as calmodulin-dependent kinase II (CaMKII) and cAMP-dependent protein kinase A (PKA) pathways. Positively regulates synaptic growth; an action that is antagonized by Octbeta1R. In Drosophila melanogaster (Fruit fly), this protein is Octopamine receptor beta-2R.